The following is a 236-amino-acid chain: 2-C-methyl-D-erythritol 4-phosphate cytidylyltransferase (236 aa).

It belongs to the IspD/TarI cytidylyltransferase family. IspD subfamily.

The enzyme catalyses 2-C-methyl-D-erythritol 4-phosphate + CTP + H(+) = 4-CDP-2-C-methyl-D-erythritol + diphosphate. It participates in isoprenoid biosynthesis; isopentenyl diphosphate biosynthesis via DXP pathway; isopentenyl diphosphate from 1-deoxy-D-xylulose 5-phosphate: step 2/6. Its function is as follows. Catalyzes the formation of 4-diphosphocytidyl-2-C-methyl-D-erythritol from CTP and 2-C-methyl-D-erythritol 4-phosphate (MEP). The sequence is that of 2-C-methyl-D-erythritol 4-phosphate cytidylyltransferase from Paraburkholderia phymatum (strain DSM 17167 / CIP 108236 / LMG 21445 / STM815) (Burkholderia phymatum).